A 1157-amino-acid chain; its full sequence is ATP-dependent helicase/deoxyribonuclease subunit B (1157 aa).

Residues 1–278 (MTLQIIAGRS…FFLENKRAKT (278 aa)) enclose the UvrD-like helicase ATP-binding domain. 8–15 (GRSGTGKT) lines the ATP pocket. A UvrD-like helicase C-terminal domain is found at 272–590 (ENKRAKTESL…VLSDMENAKL (319 aa)). [4Fe-4S] cluster-binding residues include Cys794, Cys1115, Cys1118, and Cys1124.

It belongs to the helicase family. AddB/RexB type 1 subfamily. In terms of assembly, heterodimer of AddA and AddB. It depends on Mg(2+) as a cofactor. The cofactor is [4Fe-4S] cluster.

The heterodimer acts as both an ATP-dependent DNA helicase and an ATP-dependent, dual-direction single-stranded exonuclease. Recognizes the chi site generating a DNA molecule suitable for the initiation of homologous recombination. The AddB subunit has 5' -&gt; 3' nuclease activity but not helicase activity. The protein is ATP-dependent helicase/deoxyribonuclease subunit B of Listeria monocytogenes serotype 4a (strain HCC23).